The sequence spans 441 residues: Proline--tRNA ligase (441 aa).

This sequence belongs to the class-II aminoacyl-tRNA synthetase family. ProS type 2 subfamily. Homodimer.

It localises to the cytoplasm. It catalyses the reaction tRNA(Pro) + L-proline + ATP = L-prolyl-tRNA(Pro) + AMP + diphosphate. Catalyzes the attachment of proline to tRNA(Pro) in a two-step reaction: proline is first activated by ATP to form Pro-AMP and then transferred to the acceptor end of tRNA(Pro). The sequence is that of Proline--tRNA ligase from Bartonella henselae (strain ATCC 49882 / DSM 28221 / CCUG 30454 / Houston 1) (Rochalimaea henselae).